The sequence spans 428 residues: Histidinol dehydrogenase homolog (428 aa).

Glutamine 250 and histidine 253 together coordinate Zn(2+). Active-site proton acceptor residues include glutamate 320 and histidine 321. Aspartate 354 and histidine 413 together coordinate Zn(2+).

Belongs to the histidinol dehydrogenase family. The cofactor is Zn(2+).

This chain is Histidinol dehydrogenase homolog, found in Pelagibacter ubique (strain HTCC1062).